A 51-amino-acid polypeptide reads, in one-letter code: Large ribosomal subunit protein eL39 (51 aa).

Residues 1–23 (MPSQKSFRTKQKLAKAQKQNRPL) are disordered.

It belongs to the eukaryotic ribosomal protein eL39 family. In terms of assembly, component of the large ribosomal subunit. Mature ribosomes consist of a small (40S) and a large (60S) subunit. The 40S subunit contains about 32 different proteins and 1 molecule of RNA (18S). The 60S subunit contains 45 different proteins and 3 molecules of RNA (25S, 5.8S and 5S).

The protein localises to the cytoplasm. Functionally, component of the ribosome, a large ribonucleoprotein complex responsible for the synthesis of proteins in the cell. The small ribosomal subunit (SSU) binds messenger RNAs (mRNAs) and translates the encoded message by selecting cognate aminoacyl-transfer RNA (tRNA) molecules. The large subunit (LSU) contains the ribosomal catalytic site termed the peptidyl transferase center (PTC), which catalyzes the formation of peptide bonds, thereby polymerizing the amino acids delivered by tRNAs into a polypeptide chain. The nascent polypeptides leave the ribosome through a tunnel in the LSU and interact with protein factors that function in enzymatic processing, targeting, and the membrane insertion of nascent chains at the exit of the ribosomal tunnel. This is Large ribosomal subunit protein eL39 from Candida albicans (strain SC5314 / ATCC MYA-2876) (Yeast).